Consider the following 305-residue polypeptide: tRNA uridine(34) hydroxylase (305 aa).

Residues 125 to 219 (ADENTVVVDT…YLEEVPREQS (95 aa)) enclose the Rhodanese domain. Catalysis depends on Cys179, which acts as the Cysteine persulfide intermediate.

This sequence belongs to the TrhO family.

It catalyses the reaction uridine(34) in tRNA + AH2 + O2 = 5-hydroxyuridine(34) in tRNA + A + H2O. Functionally, catalyzes oxygen-dependent 5-hydroxyuridine (ho5U) modification at position 34 in tRNAs. This is tRNA uridine(34) hydroxylase from Brucella ovis (strain ATCC 25840 / 63/290 / NCTC 10512).